Reading from the N-terminus, the 388-residue chain is Zinc finger CCCH domain-containing protein 47 (388 aa).

Disordered stretches follow at residues 1–130 (MADP…MAPL) and 144–282 (PLHE…TPSA). Composition is skewed to basic and acidic residues over residues 61-109 (AAND…KSEV) and 181-193 (PDNHDHDPRHLPR). The segment covering 260–274 (ASSSSSSSSAGQQGS) has biased composition (low complexity). 2 consecutive C3H1-type zinc fingers follow at residues 321–348 (HHKIALCSKWRKGRCHNGAACRYSHGEE) and 359–388 (GGGGRPCPELAAAKGWCRYGLNCKYCHGGV).

The sequence is that of Zinc finger CCCH domain-containing protein 47 from Oryza sativa subsp. japonica (Rice).